A 384-amino-acid polypeptide reads, in one-letter code: MAKHLFTSESVSEGHPDKIADQISDAVLDAILEQDPKARVACETYVKTGMVMVGGEVTTSAWVDIEEITRKTVRDIGYTHSDMGFDADSCAILNVIGKQSPDINQGVDRADPKEQGAGDQGLMFGYANNETDSLMPAPITYSHMLVKRQSEVRKDKTLPWLRPDAKSQVTFAYNPDGSIAGIDAVVLSTQHCDSVSQSDLIEGVMETIIKPVLPAKWLSKDTKYFINPTGRFVIGGPVGDCGLTGRKIIVDTYGGMARHGGGAFSGKDPSKVDRSAAYAARYVAKNIVAAGLADRCEIQVSYAIGVAEPTSISIETFGTAKVGEELLIDLVRRHFDLRPYGLTEMLNLARPIYQATAAYGHFGREEFPWEATDKVEVLRADAGI.

H15 contacts ATP. Residue D17 participates in Mg(2+) binding. E43 serves as a coordination point for K(+). Residues E56 and Q99 each coordinate L-methionine. Residues 99 to 109 are flexible loop; sequence QSPDINQGVDR. ATP contacts are provided by residues 164–166, 231–232, D240, 246–247, A263, and K267; these read DAK, RF, and RK. L-methionine is bound at residue D240. K271 contacts L-methionine.

Belongs to the AdoMet synthase family. As to quaternary structure, homotetramer; dimer of dimers. The cofactor is Mg(2+). K(+) serves as cofactor.

The protein resides in the cytoplasm. It catalyses the reaction L-methionine + ATP + H2O = S-adenosyl-L-methionine + phosphate + diphosphate. Its pathway is amino-acid biosynthesis; S-adenosyl-L-methionine biosynthesis; S-adenosyl-L-methionine from L-methionine: step 1/1. Functionally, catalyzes the formation of S-adenosylmethionine (AdoMet) from methionine and ATP. The overall synthetic reaction is composed of two sequential steps, AdoMet formation and the subsequent tripolyphosphate hydrolysis which occurs prior to release of AdoMet from the enzyme. This Shewanella halifaxensis (strain HAW-EB4) protein is S-adenosylmethionine synthase.